Here is a 374-residue protein sequence, read N- to C-terminus: Flagellar P-ring protein 1 (374 aa).

The first 26 residues, 1–26 (MVPNLMVIKKHLIGLLLILCPLSLQA), serve as a signal peptide directing secretion.

This sequence belongs to the FlgI family. The basal body constitutes a major portion of the flagellar organelle and consists of four rings (L,P,S, and M) mounted on a central rod.

The protein localises to the periplasm. The protein resides in the bacterial flagellum basal body. Its function is as follows. Assembles around the rod to form the L-ring and probably protects the motor/basal body from shearing forces during rotation. The sequence is that of Flagellar P-ring protein 1 from Photobacterium profundum (strain SS9).